Here is a 289-residue protein sequence, read N- to C-terminus: Right origin-binding protein (289 aa).

The region spanning 8-106 is the HTH araC/xylS-type domain; that stretch reads RDLLIWLEGH…AQTPALYRRS (99 aa). 2 consecutive DNA-binding regions (H-T-H motif) follow at residues 25-46 and 73-96; these read DNVA…KDVT and ILDI…KKQF.

Its function is as follows. Transcriptional regulator. Binds to the right arm of the replication origin oriC of the chromosome. Rob binding may influence the formation of the nucleoprotein structure, required for oriC function in the initiation of replication. This chain is Right origin-binding protein (rob), found in Escherichia coli O157:H7.